A 267-amino-acid chain; its full sequence is NAD kinase 2 (267 aa).

D52 (proton acceptor) is an active-site residue. NAD(+) contacts are provided by residues 52–53, 124–125, R151, D153, 164–169, and A188; these read DA, NE, and TAYNKS.

Belongs to the NAD kinase family. It depends on a divalent metal cation as a cofactor.

It localises to the cytoplasm. The catalysed reaction is NAD(+) + ATP = ADP + NADP(+) + H(+). Functionally, involved in the regulation of the intracellular balance of NAD and NADP, and is a key enzyme in the biosynthesis of NADP. Catalyzes specifically the phosphorylation on 2'-hydroxyl of the adenosine moiety of NAD to yield NADP. The polypeptide is NAD kinase 2 (Bacillus anthracis).